The sequence spans 190 residues: Vexin (190 aa).

A disordered region spans residues 88-156; it reads AEKKASRFSR…DEATLPLTAH (69 aa). Over residues 117 to 133 the composition is skewed to polar residues; the sequence is TDKQNAPTVPASPSSYE. Over residues 136 to 149 the composition is skewed to basic and acidic residues; that stretch reads GCREQRPENPKDEA.

Belongs to the vexin family. Expressed in differentiating progenitors in the developing central nervous system (CNS).

It is found in the cell membrane. Its subcellular location is the nucleus. Functionally, required for neurogenesis in the neural plate and retina. Cooperates with cell cycle inhibitor cdknx/p27(xic1) to enhance neurogenesis and increase the levels of the neuronal determination factor neurog2/X-ngngr-1. The chain is Vexin from Xenopus laevis (African clawed frog).